The chain runs to 295 residues: GTPase Era (295 aa).

Residues 4-171 (KSGFVTIIGR…INLIVQYLPE (168 aa)) form the Era-type G domain. Residues 12 to 19 (GRPNVGKS) form a G1 region. Residue 12-19 (GRPNVGKS) coordinates GTP. Residues 38-42 (QTTRN) are G2. The segment at 59–62 (DTPG) is G3. Residues 59 to 63 (DTPGI) and 121 to 124 (NKID) each bind GTP. Positions 121–124 (NKID) are G4. The segment at 150 to 152 (ISA) is G5. The 87-residue stretch at 194–280 (IREKILHYTD…YLELWVKVKE (87 aa)) folds into the KH type-2 domain.

Belongs to the TRAFAC class TrmE-Era-EngA-EngB-Septin-like GTPase superfamily. Era GTPase family. As to quaternary structure, monomer.

The protein localises to the cytoplasm. It is found in the cell membrane. An essential GTPase that binds both GDP and GTP, with rapid nucleotide exchange. Plays a role in 16S rRNA processing and 30S ribosomal subunit biogenesis and possibly also in cell cycle regulation and energy metabolism. This is GTPase Era from Alkaliphilus oremlandii (strain OhILAs) (Clostridium oremlandii (strain OhILAs)).